Here is a 334-residue protein sequence, read N- to C-terminus: L-lactate dehydrogenase A chain (334 aa).

NAD(+)-binding positions include 30–58 (GQVG…LEDK) and R100. Positions 107, 139, and 170 each coordinate substrate. N139 is an NAD(+) binding site. H194 functions as the Proton acceptor in the catalytic mechanism. T249 is a substrate binding site.

This sequence belongs to the LDH/MDH superfamily. LDH family. In terms of assembly, homotetramer.

It is found in the cytoplasm. The catalysed reaction is (S)-lactate + NAD(+) = pyruvate + NADH + H(+). It participates in fermentation; pyruvate fermentation to lactate; (S)-lactate from pyruvate: step 1/1. Interconverts simultaneously and stereospecifically pyruvate and lactate with concomitant interconversion of NADH and NAD(+). In Xenopus laevis (African clawed frog), this protein is L-lactate dehydrogenase A chain (ldha).